The primary structure comprises 189 residues: Tetratricopeptide repeat protein 36 (189 aa).

3 TPR repeats span residues 51 to 84, 86 to 118, and 123 to 156; these read SKAL…LPER, SAYN…SGGR, and RQSF…GSPF.

This sequence belongs to the TTC36 family.

This chain is Tetratricopeptide repeat protein 36 (TTC36), found in Homo sapiens (Human).